The following is a 274-amino-acid chain: 2,3,4,5-tetrahydropyridine-2,6-dicarboxylate N-succinyltransferase (274 aa).

The substrate site is built by R104 and D141.

This sequence belongs to the transferase hexapeptide repeat family. As to quaternary structure, homotrimer.

Its subcellular location is the cytoplasm. The enzyme catalyses (S)-2,3,4,5-tetrahydrodipicolinate + succinyl-CoA + H2O = (S)-2-succinylamino-6-oxoheptanedioate + CoA. The protein operates within amino-acid biosynthesis; L-lysine biosynthesis via DAP pathway; LL-2,6-diaminopimelate from (S)-tetrahydrodipicolinate (succinylase route): step 1/3. This Shewanella denitrificans (strain OS217 / ATCC BAA-1090 / DSM 15013) protein is 2,3,4,5-tetrahydropyridine-2,6-dicarboxylate N-succinyltransferase.